The following is a 413-amino-acid chain: Peptide chain release factor 1, mitochondrial (413 aa).

The N-terminal 40 residues, 1-40 (MRVLIRPNFLSNLIRYCSRGTHSHDRSLRSVLSSNMIRLY), are a transit peptide targeting the mitochondrion. The residue at position 287 (Gln287) is an N5-methylglutamine.

This sequence belongs to the prokaryotic/mitochondrial release factor family. Methylation increases the termination efficiency of RF1. Mostly expressed in seedlings, stems and adult plants, and, to a lower extent, in siliques. Barely detected in etiolated seedlings and roots.

Its subcellular location is the mitochondrion. Peptide chain release factor 1 directs the termination of translation in response to the peptide chain termination codons UAG and UAA in mitochondria. The protein is Peptide chain release factor 1, mitochondrial of Arabidopsis thaliana (Mouse-ear cress).